The primary structure comprises 185 residues: Phospholipase A2 inhibitor 25 kDa subunit (185 aa).

8 disulfide bridges follow: cysteine 3–cysteine 27, cysteine 6–cysteine 13, cysteine 20–cysteine 48, cysteine 54–cysteine 75, cysteine 76–cysteine 81, cysteine 101–cysteine 126, cysteine 119–cysteine 146, and cysteine 152–cysteine 172.

This sequence belongs to the CNF-like-inhibitor family. As to quaternary structure, heterodimer with phospholipase A2 inhibitor 31 kDa. Expressed by the liver.

Its subcellular location is the secreted. Its function is as follows. Inhibits the enzymatic activity of phospholipase A2. This is Phospholipase A2 inhibitor 25 kDa subunit from Naja kaouthia (Monocled cobra).